A 452-amino-acid chain; its full sequence is COBRA-like protein 1 (452 aa).

The signal sequence occupies residues 1 to 33 (MGFFLCSSSSIFFKFGISIIFLVSFSGLTPSEA). Residues Asn-42, Asn-167, Asn-175, Asn-214, Asn-239, Asn-254, Asn-323, Asn-338, and Asn-357 are each glycosylated (N-linked (GlcNAc...) asparagine). Residue Ser-432 is the site of GPI-anchor amidated serine attachment. Positions 433 to 452 (VGSLFAAMALLLIVFLHGNL) are cleaved as a propeptide — removed in mature form.

Belongs to the COBRA family. As to expression, expressed in roots, stems, leaves, flowers and siliques.

Its subcellular location is the cell membrane. This is COBRA-like protein 1 (COBL1) from Arabidopsis thaliana (Mouse-ear cress).